The following is a 596-amino-acid chain: DNA mismatch repair protein MutL (596 aa).

It belongs to the DNA mismatch repair MutL/HexB family.

This protein is involved in the repair of mismatches in DNA. It is required for dam-dependent methyl-directed DNA mismatch repair. May act as a 'molecular matchmaker', a protein that promotes the formation of a stable complex between two or more DNA-binding proteins in an ATP-dependent manner without itself being part of a final effector complex. The chain is DNA mismatch repair protein MutL from Leptospira borgpetersenii serovar Hardjo-bovis (strain JB197).